The sequence spans 1129 residues: ATP-dependent DNA helicase mph1 (1129 aa).

3 disordered regions span residues 1 to 101 (MTGS…FEDA), 124 to 222 (TQLT…QNEG), and 236 to 306 (DAFD…TQHK). The span at 45–63 (DGTASDVRRRPSENRESQR) shows a compositional bias: basic and acidic residues. Composition is skewed to polar residues over residues 203-222 (NTKA…QNEG) and 242-285 (ISLS…QTDQ). A compositionally biased stretch (basic and acidic residues) spans 297 to 306 (QKDEPPTQHK). The 169-residue stretch at 331–499 (IAQKGLFHNL…AVIDGLDIAR (169 aa)) folds into the Helicase ATP-binding domain. Residue 344-351 (LPTGLGKT) participates in ATP binding. A DEAH box motif is present at residues 447–450 (DEAH). Residues 674–843 (VLNHFMDAGE…GSRFTFHDDI (170 aa)) form the Helicase C-terminal domain. Disordered regions lie at residues 863–930 (IPDE…VEIP), 1018–1060 (RQGD…STED), and 1072–1129 (SVVK…DSDD). Basic residues-rich tracts occupy residues 877 to 889 (RRGR…PKKF) and 1028 to 1044 (SPRH…KPRY). Polar residues predominate over residues 1077–1086 (QKQQPFYSSQ).

It belongs to the DEAD box helicase family. DEAH subfamily. FANCM sub-subfamily. Interacts with the MHF histone-fold complex to form the FANCM-MHF complex.

Its subcellular location is the nucleus. The catalysed reaction is ATP + H2O = ADP + phosphate + H(+). ATP-dependent DNA helicase involved in DNA damage repair by homologous recombination and in genome maintenance. Capable of unwinding D-loops. Plays a role in limiting crossover recombinants during mitotic DNA double-strand break (DSB) repair. Component of a FANCM-MHF complex which promotes gene conversion at blocked replication forks, probably by reversal of the stalled fork. The chain is ATP-dependent DNA helicase mph1 from Aspergillus oryzae (strain ATCC 42149 / RIB 40) (Yellow koji mold).